Here is a 104-residue protein sequence, read N- to C-terminus: Integration host factor subunit beta (104 aa).

Belongs to the bacterial histone-like protein family. Heterodimer of an alpha and a beta chain.

Its function is as follows. This protein is one of the two subunits of integration host factor, a specific DNA-binding protein that functions in genetic recombination as well as in transcriptional and translational control. The polypeptide is Integration host factor subunit beta (Chromobacterium violaceum (strain ATCC 12472 / DSM 30191 / JCM 1249 / CCUG 213 / NBRC 12614 / NCIMB 9131 / NCTC 9757 / MK)).